A 193-amino-acid chain; its full sequence is Allatostatin A (193 aa).

Positions 1-25 are cleaved as a signal peptide; that stretch reads MKTSSLIAMRLIIFYLLSVVGRSTA. Residues 26 to 64 constitute a propeptide that is removed on maturation; sequence AVEEAPASSLHIPRLNPLSSNLEYDEPSEKRAYAYISEY. The residue at position 74 (isoleucine 74) is an Isoleucine amide. Residues 78 to 84 constitute a propeptide that is removed on maturation; that stretch reads WIDNSED. Isoleucine 94 and isoleucine 105 each carry isoleucine amide. A propeptide spanning residues 109-139 is cleaved from the precursor; that stretch reads NSGYRPLGMDFSVDNMDFHSREDNLDDFIDD. Isoleucine 150 is modified (isoleucine amide). Serine 165 carries the serine amide modification. Residues 169-193 constitute a propeptide that is removed on maturation; that stretch reads LNDVVGPKYLLGLGKGLSENENLIQ.

This sequence belongs to the allatostatin family. As to expression, allatostatins A1, A2 and A3 are expressed in brain, antennal lobes, optical lobes, gnathal ganglia, the retrocerebral complex and thoracic, abdominal and ventral ganglia. Allatostain A4 is expressed in brain (at protein level).

It is found in the secreted. May act as a neurotransmitter or neuromodulator. The protein is Allatostatin A of Camponotus floridanus (Florida carpenter ant).